Reading from the N-terminus, the 624-residue chain is Phosphomethylpyrimidine synthase (624 aa).

Residues 40 to 61 form a disordered region; sequence VPMRKISQSDTPTNTGREKNPP. A compositionally biased stretch (polar residues) spans 45 to 54; it reads ISQSDTPTNT. Substrate is bound by residues Asn229, Met258, Tyr287, His323, 343–345, 384–387, and Glu423; these read SRG and DGLR. His427 lines the Zn(2+) pocket. Tyr450 lines the substrate pocket. His491 is a binding site for Zn(2+). Cys571, Cys574, and Cys579 together coordinate [4Fe-4S] cluster.

It belongs to the ThiC family. In terms of assembly, homodimer. It depends on [4Fe-4S] cluster as a cofactor.

The enzyme catalyses 5-amino-1-(5-phospho-beta-D-ribosyl)imidazole + S-adenosyl-L-methionine = 4-amino-2-methyl-5-(phosphooxymethyl)pyrimidine + CO + 5'-deoxyadenosine + formate + L-methionine + 3 H(+). It participates in cofactor biosynthesis; thiamine diphosphate biosynthesis. Catalyzes the synthesis of the hydroxymethylpyrimidine phosphate (HMP-P) moiety of thiamine from aminoimidazole ribotide (AIR) in a radical S-adenosyl-L-methionine (SAM)-dependent reaction. The protein is Phosphomethylpyrimidine synthase of Methylococcus capsulatus (strain ATCC 33009 / NCIMB 11132 / Bath).